The following is a 331-amino-acid chain: Adenosine deaminase (331 aa).

Histidine 12 and histidine 14 together coordinate Zn(2+). Residues histidine 14, aspartate 16, and glycine 170 each contribute to the substrate site. Histidine 197 contacts Zn(2+). The Proton donor role is filled by glutamate 200. Residue aspartate 278 participates in Zn(2+) binding. Aspartate 279 contacts substrate.

Belongs to the metallo-dependent hydrolases superfamily. Adenosine and AMP deaminases family. Adenosine deaminase subfamily. Requires Zn(2+) as cofactor.

It carries out the reaction adenosine + H2O + H(+) = inosine + NH4(+). The enzyme catalyses 2'-deoxyadenosine + H2O + H(+) = 2'-deoxyinosine + NH4(+). In terms of biological role, catalyzes the hydrolytic deamination of adenosine and 2-deoxyadenosine. The protein is Adenosine deaminase of Shewanella sp. (strain MR-4).